Consider the following 160-residue polypeptide: 6,7-dimethyl-8-ribityllumazine synthase (160 aa).

5-amino-6-(D-ribitylamino)uracil contacts are provided by residues F23, S61–E63, and A85–I87. D90–T91 contributes to the (2S)-2-hydroxy-3-oxobutyl phosphate binding site. H93 (proton donor) is an active-site residue. F118 contacts 5-amino-6-(D-ribitylamino)uracil. A (2S)-2-hydroxy-3-oxobutyl phosphate-binding site is contributed by R132.

The protein belongs to the DMRL synthase family.

It carries out the reaction (2S)-2-hydroxy-3-oxobutyl phosphate + 5-amino-6-(D-ribitylamino)uracil = 6,7-dimethyl-8-(1-D-ribityl)lumazine + phosphate + 2 H2O + H(+). It participates in cofactor biosynthesis; riboflavin biosynthesis; riboflavin from 2-hydroxy-3-oxobutyl phosphate and 5-amino-6-(D-ribitylamino)uracil: step 1/2. Functionally, catalyzes the formation of 6,7-dimethyl-8-ribityllumazine by condensation of 5-amino-6-(D-ribitylamino)uracil with 3,4-dihydroxy-2-butanone 4-phosphate. This is the penultimate step in the biosynthesis of riboflavin. The chain is 6,7-dimethyl-8-ribityllumazine synthase from Parasynechococcus marenigrum (strain WH8102).